The primary structure comprises 430 residues: Glycine reductase complex component B subunits alpha and beta (430 aa).

Residue cysteine 242 is the Schiff-base intermediate with substrate; via pyruvic acid of the active site. The residue at position 242 (cysteine 242) is a Pyruvic acid (Cys).

As to quaternary structure, heterohexamer of two alpha, two beta and two gamma subunits. Component of the glycine reductase complex, together with components A and C. PB is substrate specific. Post-translationally, the peptide chain is cleaved into beta and alpha chains, and the alpha chain N-terminal cysteine is deaminated and oxidized to form a reactive pyruvoyl group.

It catalyses the reaction acetyl phosphate + [thioredoxin]-disulfide + NH4(+) + H2O = [thioredoxin]-dithiol + glycine + phosphate + H(+). Functionally, in the first step of glycine reductase, the substrate is bound to component PB via a Schiff base intermediate. Then the PB-activated substrate is nucleophilically attacked by the selenol anion of component PA to transform it to a carboxymethylated selenoether and the respective amine. By action of component PC, acetyl phosphate is formed, leaving component PA in its oxidized state. Finally component PA becomes reduced by the thioredoxin system to start a new catalytic cycle of reductive deamination. This chain is Glycine reductase complex component B subunits alpha and beta (grdE), found in Acetoanaerobium sticklandii (strain ATCC 12662 / DSM 519 / JCM 1433 / CCUG 9281 / NCIMB 10654 / HF) (Clostridium sticklandii).